Here is an 818-residue protein sequence, read N- to C-terminus: MSEGAYQRLWESSHATLQELLDQEQLLLEPAPDRERQSFQYRLASLYLHYLGLLRRFDTVYDQMVQPQKRRLLRRLLDGVAGRVLELKDELVRADLCENHCLDRVLQDFKLTPADLEVPIPKYFLLEQSTTVRERGLILAEILSRLEPVSSQKSFTGMHRTEAIILVQKAERARQGRLRATFMREIRRDEEQDGRIREDGWHKFSQGQAAVTIQKVWKGYLQRKRTQQDRRMEMEFIGMLPSPNQVEHLSIISQPCLVEDVQRLRQMEKEEEFRAAMVKAHDSLVETEGPDMKEKMKEQIRQWFIECHDLTGRFPDYPDASSGGSYSIFADKTPEQVRMELEMQMQENRKKEQEKSKEKGKDEKEKKKGKEEKAKKGEVDAVLQVLPSKCIPMICAGHEEYLNTWKNRCESIHPSQNYDSETLREEKRKEVELEIRIQVDELMRQELRKLRLAVDKEEERPLRAPKKTPGKKTGKKKEKDLTSDRSVESLYEELVISGLLRKSESVALKDYIGDFLYLGSTLSLVKKLPMPSLFDIRQNVALYAVLRLGSPDIHIMAPLIRSILLVGPSGMGKKMLVKAVCTETGANLFDLSPENLLGKYPGRNGAQMMVHIVFKVARLLQPSVIWIGNAEKNFYKKTPKEDKEMDPKRIKKDLTKALRLLTPGDRVMLIGTTSRPQLAEMRGLCRVYERILFMPRPDYASRYVLWKRMIEARGIQPTQHLDISALAKVSDGYTPGHILQAIQSVLSERRFLQLSKRPLVASEFLGQLVKLDPVYREEEESLKDWYFKTPLGKKSMKHRMDQLEAEEAKLDKEKKKRK.

Residues 206 to 235 (QGQAAVTIQKVWKGYLQRKRTQQDRRMEME) form the IQ domain. Disordered regions lie at residues 344 to 377 (QMQE…AKKG) and 458 to 482 (EERP…KDLT). The span at 463 to 476 (RAPKKTPGKKTGKK) shows a compositional bias: basic residues. 567-574 (GPSGMGKK) is a binding site for ATP. Residues 795–818 (SMKHRMDQLEAEEAKLDKEKKKRK) form a disordered region. Over residues 798-818 (HRMDQLEAEEAKLDKEKKKRK) the composition is skewed to basic and acidic residues.

Belongs to the AAA ATPase family.

The chain is IQ and AAA domain-containing protein 1-like (IQCA1L) from Homo sapiens (Human).